The following is a 342-amino-acid chain: HPr kinase/phosphorylase (342 aa).

Active-site residues include His153 and Lys174. Residue 168–175 (GKSGLGKS) coordinates ATP. Ser175 contributes to the Mg(2+) binding site. Asp192 serves as the catalytic Proton acceptor; for phosphorylation activity. Proton donor; for dephosphorylation activity. Positions 217-226 (MEIRGLGVVD) are important for the catalytic mechanism of both phosphorylation and dephosphorylation. Glu218 contributes to the Mg(2+) binding site. Arg259 is an active-site residue. The segment at 280 to 285 (PIFPGK) is important for the catalytic mechanism of dephosphorylation.

This sequence belongs to the HPrK/P family. Homohexamer. The cofactor is Mg(2+).

It catalyses the reaction [HPr protein]-L-serine + ATP = [HPr protein]-O-phospho-L-serine + ADP + H(+). The catalysed reaction is [HPr protein]-O-phospho-L-serine + phosphate + H(+) = [HPr protein]-L-serine + diphosphate. In terms of biological role, catalyzes the ATP- as well as the pyrophosphate-dependent phosphorylation of a specific serine residue in HPr, a phosphocarrier protein of the phosphoenolpyruvate-dependent sugar phosphotransferase system (PTS). HprK/P also catalyzes the pyrophosphate-producing, inorganic phosphate-dependent dephosphorylation (phosphorolysis) of seryl-phosphorylated HPr (P-Ser-HPr). The chain is HPr kinase/phosphorylase from Chlorobaculum tepidum (strain ATCC 49652 / DSM 12025 / NBRC 103806 / TLS) (Chlorobium tepidum).